The primary structure comprises 89 residues: Small membrane A-kinase anchor protein (89 aa).

Residues 1–29 (MGCMKSKRRDPTQNSDSSEKVDGKPGKHG) form a disordered region. Residue glycine 2 is the site of N-myristoyl glycine attachment. Basic and acidic residues predominate over residues 17-29 (SSEKVDGKPGKHG).

This sequence belongs to the small membrane AKAP family. In terms of processing, may be palmitoylated at Cys-3.

The protein localises to the cell membrane. Its function is as follows. Binds to type I regulatory subunits of protein kinase A and may anchor/target them to the plasma membrane. This is Small membrane A-kinase anchor protein from Danio rerio (Zebrafish).